We begin with the raw amino-acid sequence, 156 residues long: Cell division protein SepF (156 aa).

The span at Ser23–Asp36 shows a compositional bias: basic and acidic residues. The tract at residues Ser23 to Pro50 is disordered.

It belongs to the SepF family. As to quaternary structure, homodimer. Interacts with FtsZ.

The protein resides in the cytoplasm. Cell division protein that is part of the divisome complex and is recruited early to the Z-ring. Probably stimulates Z-ring formation, perhaps through the cross-linking of FtsZ protofilaments. Its function overlaps with FtsA. The protein is Cell division protein SepF of Bacillus thuringiensis (strain Al Hakam).